Reading from the N-terminus, the 199-residue chain is Recombination protein RecR (199 aa).

The C4-type zinc-finger motif lies at 58-73; that stretch reads CKKCFNLTSEEECDIC. Positions 81 to 175 constitute a Toprim domain; sequence NIICVVAETK…KVTRIAYGLP (95 aa).

It belongs to the RecR family.

In terms of biological role, may play a role in DNA repair. It seems to be involved in an RecBC-independent recombinational process of DNA repair. It may act with RecF and RecO. The polypeptide is Recombination protein RecR (Prochlorococcus marinus (strain MIT 9515)).